The primary structure comprises 203 residues: Holliday junction branch migration complex subunit RuvA (203 aa).

Residues 1-63 (MIAFVSGPVA…EDSLTLYGFV (63 aa)) form a domain I region. The tract at residues 64–141 (DDDERQVFEL…GEPLGTGGPA (78 aa)) is domain II. A flexible linker region spans residues 141–145 (AIGRA). Positions 146 to 203 (VTTGWREQLHAALIGLGYATREADEAVAAVAPQAEAAGGTPQVGQLLKAALQTLNRTR) are domain III.

It belongs to the RuvA family. Homotetramer. Forms an RuvA(8)-RuvB(12)-Holliday junction (HJ) complex. HJ DNA is sandwiched between 2 RuvA tetramers; dsDNA enters through RuvA and exits via RuvB. An RuvB hexamer assembles on each DNA strand where it exits the tetramer. Each RuvB hexamer is contacted by two RuvA subunits (via domain III) on 2 adjacent RuvB subunits; this complex drives branch migration. In the full resolvosome a probable DNA-RuvA(4)-RuvB(12)-RuvC(2) complex forms which resolves the HJ.

The protein localises to the cytoplasm. Functionally, the RuvA-RuvB-RuvC complex processes Holliday junction (HJ) DNA during genetic recombination and DNA repair, while the RuvA-RuvB complex plays an important role in the rescue of blocked DNA replication forks via replication fork reversal (RFR). RuvA specifically binds to HJ cruciform DNA, conferring on it an open structure. The RuvB hexamer acts as an ATP-dependent pump, pulling dsDNA into and through the RuvAB complex. HJ branch migration allows RuvC to scan DNA until it finds its consensus sequence, where it cleaves and resolves the cruciform DNA. The chain is Holliday junction branch migration complex subunit RuvA from Streptomyces avermitilis (strain ATCC 31267 / DSM 46492 / JCM 5070 / NBRC 14893 / NCIMB 12804 / NRRL 8165 / MA-4680).